A 212-amino-acid chain; its full sequence is ER lumen protein-retaining receptor 1 (212 aa).

Residues 1–4 (MNIF) are Lumenal-facing. The chain crosses the membrane as a helical span at residues 5 to 24 (RFLGDISHLSAILILLLKIW). The Cytoplasmic portion of the chain corresponds to 25–32 (KSRSCAGI). Residues 33–52 (SGKSQLLFAIVFTTRYLDLF) traverse the membrane as a helical segment. Residues 47 to 48 (RY) are interaction with the K-D-E-L motif on target proteins. The Lumenal portion of the chain corresponds to 53–58 (TNFISL). A helical transmembrane segment spans residues 59 to 79 (YNTSMKMVYVASSYATIWMIY). The Cytoplasmic portion of the chain corresponds to 80-92 (SKFKATYDGNHDT). A helical membrane pass occupies residues 93–110 (FRVEFLIVPTAILAFLVN). Over 111 to 116 (HDFTPL) the chain is Lumenal. Residues 117–135 (EILWTFSIYLESVAILPQL) traverse the membrane as a helical segment. Topologically, residues 136 to 149 (FMVSKTGEAETITS) are cytoplasmic. A helical membrane pass occupies residues 150–168 (HYLFALGIYRALYLFNWIW). Residues 159 to 169 (RALYLFNWIWR) are interaction with the K-D-E-L motif on target proteins. Residues 169–178 (RYQFEGFFDL) are Lumenal-facing. Residues 179 to 199 (IAIVAGLVQTVLYCDFFYLYI) form a helical membrane-spanning segment. Residues 200–212 (TKVLKGKKLSLPA) are Cytoplasmic-facing. The important for recycling of cargo proteins with the sequence motif K-D-E-L from the Golgi to the endoplasmic reticulum stretch occupies residues 204-207 (KGKK).

It belongs to the ERD2 family.

The protein localises to the golgi apparatus membrane. The protein resides in the cytoplasmic vesicle. It localises to the COPI-coated vesicle membrane. It is found in the endoplasmic reticulum membrane. Its subcellular location is the endoplasmic reticulum-Golgi intermediate compartment membrane. Receptor for the C-terminal sequence motif K-D-E-L that is present on endoplasmic reticulum resident proteins and that mediates their recycling from the Golgi back to the endoplasmic reticulum. This is ER lumen protein-retaining receptor 1 (kdelr1) from Xenopus tropicalis (Western clawed frog).